The primary structure comprises 103 residues: Small ribosomal subunit protein uS10 (103 aa).

It belongs to the universal ribosomal protein uS10 family. As to quaternary structure, part of the 30S ribosomal subunit.

Functionally, involved in the binding of tRNA to the ribosomes. The sequence is that of Small ribosomal subunit protein uS10 from Syntrophobacter fumaroxidans (strain DSM 10017 / MPOB).